We begin with the raw amino-acid sequence, 81 residues long: Exodeoxyribonuclease 7 small subunit (81 aa).

Residues 59–81 (KLVDKDGNEKTLDPQNASAPEEE) form a disordered region. Residues 60 to 70 (LVDKDGNEKTL) are compositionally biased toward basic and acidic residues. The span at 71 to 81 (DPQNASAPEEE) shows a compositional bias: polar residues.

The protein belongs to the XseB family. In terms of assembly, heterooligomer composed of large and small subunits.

Its subcellular location is the cytoplasm. The enzyme catalyses Exonucleolytic cleavage in either 5'- to 3'- or 3'- to 5'-direction to yield nucleoside 5'-phosphates.. Functionally, bidirectionally degrades single-stranded DNA into large acid-insoluble oligonucleotides, which are then degraded further into small acid-soluble oligonucleotides. The protein is Exodeoxyribonuclease 7 small subunit of Lactobacillus gasseri (strain ATCC 33323 / DSM 20243 / BCRC 14619 / CIP 102991 / JCM 1131 / KCTC 3163 / NCIMB 11718 / NCTC 13722 / AM63).